The following is a 473-amino-acid chain: MGRTLYDKIFDEHVVHTEEDGTAVLYIDRHLVHEVTSPQAFEGLREAGRKVWRVSSIVATADHNTPTTGWERGYDGIADPISKEQIVTLDKNIQESGAAAFFPFLSKRQGIVHVIGPENGATLPGMTVVCGDSHTSTHGAFGALAHGIGTSEVEHVMATQTLLAKKAKNMLVKVNGKVAPGITAKDIVLAIIGKIGTAGGTGYTIEFAGEAIRDLSMEGRMTVCNMAIEAGARAGLVAVDDKTINYVKGRPLAPTGVEWDQAVAYWKTLHSDADAKFDAVVELNAAEIVPQVTWGTSPEMVLGIDAVVPDPDKEKDPSKRGAIERALTYMGLQPGKPMDDIFVDKVFIGSCTNSRIEDMREAAAVVKKLGQKVAKNIKLAMVVPGSGLVKEQAEREGLDAIFKAAGFEWREPGCSMCLAMNADRLEPGERCASTSNRNFEGRQGAGGRTHLVSPAMAAAAAIHGHFVDIRQFA.

Residues Cys-351, Cys-414, and Cys-417 each contribute to the [4Fe-4S] cluster site.

It belongs to the aconitase/IPM isomerase family. LeuC type 1 subfamily. In terms of assembly, heterodimer of LeuC and LeuD. It depends on [4Fe-4S] cluster as a cofactor.

It carries out the reaction (2R,3S)-3-isopropylmalate = (2S)-2-isopropylmalate. Its pathway is amino-acid biosynthesis; L-leucine biosynthesis; L-leucine from 3-methyl-2-oxobutanoate: step 2/4. Functionally, catalyzes the isomerization between 2-isopropylmalate and 3-isopropylmalate, via the formation of 2-isopropylmaleate. This Acidovorax sp. (strain JS42) protein is 3-isopropylmalate dehydratase large subunit.